The chain runs to 216 residues: Adenylate kinase (216 aa).

Position 10–15 (10–15 (GAGKGT)) interacts with ATP. The tract at residues 30–59 (STGDMFRAAMKAETEMGLQAKSFIDKGALV) is NMP. AMP is bound by residues Thr-31, Arg-36, 57-59 (ALV), 85-88 (GFPR), and Gln-92. The tract at residues 126 to 163 (GRRICKECGATYHLEFNAPAKADVCDKCGGELYQRSDD) is LID. Arg-127 is a binding site for ATP. Zn(2+)-binding residues include Cys-130 and Cys-133. 136–137 (TY) lines the ATP pocket. Zn(2+)-binding residues include Cys-150 and Cys-153. 2 residues coordinate AMP: Arg-160 and Arg-171. Gln-199 contributes to the ATP binding site.

It belongs to the adenylate kinase family. In terms of assembly, monomer.

It is found in the cytoplasm. The enzyme catalyses AMP + ATP = 2 ADP. The protein operates within purine metabolism; AMP biosynthesis via salvage pathway; AMP from ADP: step 1/1. Catalyzes the reversible transfer of the terminal phosphate group between ATP and AMP. Plays an important role in cellular energy homeostasis and in adenine nucleotide metabolism. This chain is Adenylate kinase, found in Bacillus anthracis (strain A0248).